A 402-amino-acid polypeptide reads, in one-letter code: Galactoside 2-alpha-L-fucosyltransferase (402 aa).

The Cytoplasmic portion of the chain corresponds to 1–6 (MRYNSN). Residues 7–27 (YLMYFCLVLGIFANIYVIIKI) traverse the membrane as a helical; Signal-anchor for type II membrane protein segment. Over 28-402 (TLGSSHILEY…TDLNGKISKY (375 aa)) the chain is Lumenal. N-linked (GlcNAc...) asparagine glycosylation is found at N119, N175, and N301.

The protein belongs to the glycosyltransferase 11 family. May form oligomers. Post-translationally, N-glycosylated. Expression is restricted to pharyngeal neurons and gland cells.

It localises to the golgi apparatus. The protein resides in the golgi stack membrane. Its pathway is protein modification; protein glycosylation. Selectively catalyzes the addition of fucose in alpha 1-2 linkage to Gal-beta-(1-&gt;3)-GalNAc-alpha-R, Gal-beta-(1-&gt;3)-(GlcNAc-beta-(1-&gt;6))-GalNAc-alpha-R and Gal-beta-(1-&gt;3)-GalNAc acceptors but not Gal-beta-(1-&gt;3)-GlcNAc-beta-(1-&gt;3)-Gal-beta-(1-&gt;4)-Glc in vitro. This is Galactoside 2-alpha-L-fucosyltransferase from Caenorhabditis elegans.